The primary structure comprises 632 residues: Probable potassium transport system protein Kup 1 (632 aa).

A run of 12 helical transmembrane segments spans residues Leu-17–Leu-37, Leu-60–Leu-80, Thr-106–Ile-126, Leu-146–Ser-166, Phe-175–Ile-195, Ala-210–Leu-230, Trp-254–Leu-274, Ala-292–Ile-312, Ile-344–Phe-364, Leu-370–Phe-390, Leu-401–Ala-421, and Ile-426–Thr-446.

This sequence belongs to the HAK/KUP transporter (TC 2.A.72) family.

The protein localises to the cell inner membrane. The catalysed reaction is K(+)(in) + H(+)(in) = K(+)(out) + H(+)(out). Transport of potassium into the cell. Likely operates as a K(+):H(+) symporter. The polypeptide is Probable potassium transport system protein Kup 1 (Rhizobium johnstonii (strain DSM 114642 / LMG 32736 / 3841) (Rhizobium leguminosarum bv. viciae)).